The following is a 240-amino-acid chain: DNA repair protein RecO (240 aa).

Belongs to the RecO family.

Its function is as follows. Involved in DNA repair and RecF pathway recombination. The protein is DNA repair protein RecO of Actinobacillus pleuropneumoniae serotype 7 (strain AP76).